Reading from the N-terminus, the 1383-residue chain is Cell surface hyaluronidase (1383 aa).

The segment at 1-76 (MYAAGSRGHS…QRTPSESRKR (76 aa)) is disordered. Residues 1-82 (MYAAGSRGHS…SRKRKRHKNT (82 aa)) are Cytoplasmic-facing. Residues Ser-10, Ser-53, and Ser-63 each carry the phosphoserine modification. A helical; Signal-anchor for type II membrane protein membrane pass occupies residues 83–103 (FICFAITSFSFFVALAVILGI). The Extracellular portion of the chain corresponds to 104-1383 (SSKYAPDENC…DLLQQALKVL (1280 aa)). Positions 121–245 (RNWDPGQDSA…QRTSWTMLAR (125 aa)) constitute a G8 domain. The GG-type lectin 1 domain occupies 255–412 (GSYAFEKDFS…ISLSGFRVDI (158 aa)). An N-linked (GlcNAc...) asparagine glycan is attached at Asn-292. 3 PbH1 repeats span residues 669-691 (HPNNHLINNAAAGSQDAGIWYLF), 711-733 (TPLGIFYNNRVHSNFKAGLFVDK), and 791-812 (GGDIIVQNSAFADNGKGLTFAS). Asn-914 and Asn-1234 each carry an N-linked (GlcNAc...) asparagine glycan. Residues 1208–1366 (KSYLPVRFQS…MEEYGCSRTG (159 aa)) enclose the GG-type lectin 2 domain.

Belongs to the CEMIP family. Ca(2+) is required as a cofactor. As to expression, widely expressed. Strongly expressed in endothelial cells in the subcapsular sinus of lymph nodes and in the liver sinusoid, two primary sites implicated in systemic hyaluronan turnover.

Its subcellular location is the cell membrane. The catalysed reaction is Random hydrolysis of (1-&gt;4)-linkages between N-acetyl-beta-D-glucosamine and D-glucuronate residues in hyaluronate.. Functionally, cell surface hyaluronidase that mediates the initial cleavage of extracellular high-molecular-weight hyaluronan into intermediate-size hyaluronan of approximately 5 kDa fragments. Very specific to hyaluronan; not able to cleave chondroitin sulfate or dermatan sulfate. Has an essential function in systemic hyaluronan catabolism and turnover and regulates cell adhesion and migration via hyaluronan degradation at focal adhesion sites. Acts as a regulator of angiogenesis and heart morphogenesis by mediating degradation of extracellular hyaluronan, thereby regulating VEGF signaling. In Mus musculus (Mouse), this protein is Cell surface hyaluronidase.